Reading from the N-terminus, the 548-residue chain is (2S)-methylsuccinyl-CoA dehydrogenase (548 aa).

FAD is bound by residues 282–291 and 315–317; these read AVFTEPNTGS and WIT. Serine 291 contributes to the substrate binding site. Substrate is bound at residue 409–412; that stretch reads ESAR. Residues arginine 437 and 505-509 contribute to the FAD site; that span reads QIHGG. Catalysis depends on glutamate 532, which acts as the Proton acceptor. 534–536 provides a ligand contact to FAD; sequence AAE.

The protein belongs to the acyl-CoA dehydrogenase family. Homodimer. It depends on FAD as a cofactor.

The enzyme catalyses (2S)-methylsuccinyl-CoA + oxidized [electron-transfer flavoprotein] + H(+) = 2-methylfumaryl-CoA + reduced [electron-transfer flavoprotein]. Its function is as follows. Involved in the ethylmalonyl-CoA pathway, a new acetyl-CoA assimilation strategy that operates in a number of bacteria and replaces the glyoxylate cycle. Catalyzes the oxidation of (2S)-methylsuccinyl-CoA to yield mesaconyl-(C1)-CoA. Highly specific for (S)-methylsuccinyl-CoA. The sequence is that of (2S)-methylsuccinyl-CoA dehydrogenase from Cereibacter sphaeroides (Rhodobacter sphaeroides).